An 874-amino-acid polypeptide reads, in one-letter code: Probable inorganic carbon transporter subunit DabA (874 aa).

Residues cysteine 398, aspartate 400, histidine 580, and cysteine 595 each coordinate Zn(2+).

The protein belongs to the inorganic carbon transporter (TC 9.A.2) DabA family. Forms a complex with DabB. It depends on Zn(2+) as a cofactor.

It localises to the cell membrane. Part of an energy-coupled inorganic carbon pump. In Bacillus cereus (strain 03BB102), this protein is Probable inorganic carbon transporter subunit DabA.